We begin with the raw amino-acid sequence, 352 residues long: Uroporphyrinogen decarboxylase (352 aa).

Substrate-binding positions include 29 to 33 (RQAGR), phenylalanine 48, aspartate 78, tyrosine 154, serine 209, and histidine 322.

Belongs to the uroporphyrinogen decarboxylase family. Homodimer.

It localises to the cytoplasm. It carries out the reaction uroporphyrinogen III + 4 H(+) = coproporphyrinogen III + 4 CO2. Its pathway is porphyrin-containing compound metabolism; protoporphyrin-IX biosynthesis; coproporphyrinogen-III from 5-aminolevulinate: step 4/4. Catalyzes the decarboxylation of four acetate groups of uroporphyrinogen-III to yield coproporphyrinogen-III. The polypeptide is Uroporphyrinogen decarboxylase (Bacillus pumilus (strain SAFR-032)).